A 427-amino-acid chain; its full sequence is 5-hydroxybenzimidazole synthase BzaA (427 aa).

The protein belongs to the ThiC family. 5-hydroxybenzimidazole synthase subfamily. Requires [4Fe-4S] cluster as cofactor.

The catalysed reaction is 5-amino-1-(5-phospho-beta-D-ribosyl)imidazole + AH2 + S-adenosyl-L-methionine = 5-hydroxybenzimidazole + 5'-deoxyadenosine + formate + L-methionine + A + NH4(+) + phosphate + 2 H(+). The protein operates within cofactor biosynthesis; adenosylcobalamin biosynthesis. Functionally, together with BzaB, catalyzes the conversion of aminoimidazole ribotide (AIR) to 5-hydroxybenzimidazole (5-HBI) in a radical S-adenosyl-L-methionine (SAM)-dependent reaction. Is thus involved in the anaerobic biosynthesis of dimethylbenzimidazole (DMB), the lower axial ligand of vitamin B12 (cobalamin). Requires BzaB for catalytic activity, as BzaA alone displays no activity. This is 5-hydroxybenzimidazole synthase BzaA from Eubacterium limosum.